The following is a 433-amino-acid chain: Serine/threonine-protein phosphatase 2A activator 2 (433 aa).

The segment covering 1–10 has biased composition (pro residues); that stretch reads MTSQAPPQPA. Disordered stretches follow at residues 1–67 and 367–400; these read MTSQ…NWTF and SMSE…GTGW. Residues 11 to 23 show a composition bias toward low complexity; the sequence is SSPGVAAPAAASS. Positions 45–59 are enriched in pro residues; the sequence is NPTPIPETPALPTPP. The span at 367–382 shows a compositional bias: acidic residues; the sequence is SMSEDTGAGDEADVED. A compositionally biased stretch (basic and acidic residues) spans 383–396; that stretch reads DPHAGHDHTGKAHD.

This sequence belongs to the PTPA-type PPIase family.

The protein localises to the cytoplasm. It carries out the reaction [protein]-peptidylproline (omega=180) = [protein]-peptidylproline (omega=0). Functionally, PPIases accelerate the folding of proteins. It catalyzes the cis-trans isomerization of proline imidic peptide bonds in oligopeptides. Acts as a regulatory subunit for PP2A-like phosphatases modulating their activity or substrate specificity, probably by inducing a conformational change in the catalytic subunit, a direct target of the PPIase. Can reactivate inactive phosphatase PP2A-phosphatase methylesterase complexes (PP2Ai) in presence of ATP and Mg(2+) by dissociating the inactive form from the complex. This is Serine/threonine-protein phosphatase 2A activator 2 (RRD2) from Gibberella zeae (strain ATCC MYA-4620 / CBS 123657 / FGSC 9075 / NRRL 31084 / PH-1) (Wheat head blight fungus).